Reading from the N-terminus, the 382-residue chain is Transforming growth factor beta-1 proprotein (382 aa).

The signal sequence occupies residues 1–20 (MRAVCLMLTALLMLEYVCRS). Residues 23–68 (MSTCKSLDLELVKRKRIEAIRGQILSKLRLPKEPEIDQEGDTEEVP) form a straightjacket domain region. Positions 69–264 (ASLMSIYNST…SLPVERHSQL (196 aa)) are arm domain. 3 N-linked (GlcNAc...) asparagine glycosylation sites follow: asparagine 76, asparagine 116, and asparagine 125. Positions 218–243 (GKPMEEFRFKISGMNKLRGNTETLAM) are bowtie tail. Residues 235–237 (RGN) carry the Cell attachment site motif. Disulfide bonds link cysteine 278/cysteine 286, cysteine 285/cysteine 348, cysteine 314/cysteine 379, and cysteine 318/cysteine 381.

Belongs to the TGF-beta family. In terms of assembly, latency-associated peptide: Homodimer; disulfide-linked. Latency-associated peptide: Interacts with Transforming growth factor beta-1 (TGF-beta-1) chain; interaction is non-covalent and maintains (TGF-beta-1) in a latent state; each Latency-associated peptide (LAP) monomer interacts with TGF-beta-1 in the other monomer. Transforming growth factor beta-1: Homodimer; disulfide-linked. Transforming growth factor beta-1: Interacts with TGF-beta receptors (tgfbr1 and tgfbr2), leading to signal transduction. Interacts with EFEMP2. Post-translationally, transforming growth factor beta-1 proprotein: The precursor proprotein is cleaved in the Golgi apparatus to form Transforming growth factor beta-1 (TGF-beta-1) and Latency-associated peptide (LAP) chains, which remain non-covalently linked, rendering TGF-beta-1 inactive. As to expression, expressed in blood leukocytes, kidney macrophages, brain, gill and spleen but not in liver.

The protein localises to the secreted. It is found in the extracellular space. The protein resides in the extracellular matrix. Its function is as follows. Transforming growth factor beta-1 proprotein: Precursor of the Latency-associated peptide (LAP) and Transforming growth factor beta-1 (TGF-beta-1) chains, which constitute the regulatory and active subunit of TGF-beta-1, respectively. Functionally, required to maintain the Transforming growth factor beta-1 (TGF-beta-1) chain in a latent state during storage in extracellular matrix. Associates non-covalently with TGF-beta-1 and regulates its activation via interaction with 'milieu molecules', such as LTBP1, LRRC32/GARP and LRRC33/NRROS, that control activation of TGF-beta-1. Interaction with integrins (ITGAV:ITGB6 or ITGAV:ITGB8) results in distortion of the Latency-associated peptide chain and subsequent release of the active TGF-beta-1. Transforming growth factor beta-1: Multifunctional protein that regulates the growth and differentiation of various cell types and is involved in various processes, such as normal development, immune function, microglia function and responses to neurodegeneration. Activation into mature form follows different steps: following cleavage of the proprotein in the Golgi apparatus, Latency-associated peptide (LAP) and Transforming growth factor beta-1 (TGF-beta-1) chains remain non-covalently linked rendering TGF-beta-1 inactive during storage in extracellular matrix. At the same time, LAP chain interacts with 'milieu molecules', such as ltbp1, lrrc32/garp and lrrc33/nrros that control activation of TGF-beta-1 and maintain it in a latent state during storage in extracellular milieus. TGF-beta-1 is released from LAP by integrins (ITGAV:ITGB6 or ITGAV:ITGB8): integrin-binding to LAP stabilizes an alternative conformation of the LAP bowtie tail and results in distortion of the LAP chain and subsequent release of the active TGF-beta-1. Once activated following release of LAP, TGF-beta-1 acts by binding to TGF-beta receptors (tgfbr1 and tgfbr2), which transduce signal. While expressed by many cells types, TGF-beta-1 only has a very localized range of action within cell environment thanks to fine regulation of its activation by Latency-associated peptide chain (LAP) and 'milieu molecules'. Plays an important role in bone remodeling: acts as a potent stimulator of osteoblastic bone formation. Can promote either T-helper 17 cells (Th17) or regulatory T-cells (Treg) lineage differentiation in a concentration-dependent manner. Can induce epithelial-to-mesenchymal transition (EMT) and cell migration in various cell types. This Oncorhynchus mykiss (Rainbow trout) protein is Transforming growth factor beta-1 proprotein (tgfb1).